The following is a 202-amino-acid chain: 3-isopropylmalate dehydratase small subunit (202 aa).

This sequence belongs to the LeuD family. LeuD type 1 subfamily. In terms of assembly, heterodimer of LeuC and LeuD.

It catalyses the reaction (2R,3S)-3-isopropylmalate = (2S)-2-isopropylmalate. It participates in amino-acid biosynthesis; L-leucine biosynthesis; L-leucine from 3-methyl-2-oxobutanoate: step 2/4. Its function is as follows. Catalyzes the isomerization between 2-isopropylmalate and 3-isopropylmalate, via the formation of 2-isopropylmaleate. The sequence is that of 3-isopropylmalate dehydratase small subunit from Nocardioides sp. (strain ATCC BAA-499 / JS614).